The chain runs to 318 residues: Protein-methionine-sulfoxide reductase catalytic subunit MsrP (318 aa).

A signal peptide (tat-type signal) is located at residues 1–40 (MNRFTRYDVTPEVIFNQRRQIIKAMGLGAAALSLPNIGFA). Mo-molybdopterin-binding positions include Asn-72, 75-76 (YE), Cys-130, Thr-165, Asn-217, Arg-222, and 233-235 (SIK).

Belongs to the MsrP family. Heterodimer of a catalytic subunit (MsrP) and a heme-binding subunit (MsrQ). Mo-molybdopterin is required as a cofactor. Predicted to be exported by the Tat system. The position of the signal peptide cleavage has not been experimentally proven.

Its subcellular location is the periplasm. The enzyme catalyses L-methionyl-[protein] + a quinone + H2O = L-methionyl-(S)-S-oxide-[protein] + a quinol. The catalysed reaction is L-methionyl-[protein] + a quinone + H2O = L-methionyl-(R)-S-oxide-[protein] + a quinol. Part of the MsrPQ system that repairs oxidized periplasmic proteins containing methionine sulfoxide residues (Met-O), using respiratory chain electrons. Thus protects these proteins from oxidative-stress damage caused by reactive species of oxygen and chlorine generated by the host defense mechanisms. MsrPQ is essential for the maintenance of envelope integrity under bleach stress, rescuing a wide series of structurally unrelated periplasmic proteins from methionine oxidation. The catalytic subunit MsrP is non-stereospecific, being able to reduce both (R-) and (S-) diastereoisomers of methionine sulfoxide. The protein is Protein-methionine-sulfoxide reductase catalytic subunit MsrP of Actinobacillus pleuropneumoniae serotype 3 (strain JL03).